Reading from the N-terminus, the 913-residue chain is MSGAPPPSSGFAPRSYGQQPLSHAPRSSMMSVEYDGIPLPPPSIRSCGSQQYVTSYIPTGAAFPPSSVQDMISSMKSYASATDLVRTYSEIPSVEEALSTLDRAAAALNARRYRDALKLYLEGGYAMANVAERQANPKICNLLTSKGFETLNWCARLCDWIEGRIKEKHPRPGVHKVGIPVSNWDEDWVGPFMDEEEARRMWYTPVYCPHPIDFSNLGYRLRCVETGRRPRLMICITMYNEGPQQLKATLKKLANNLAYLKEQMPGDEKSLTGAFAGDDVWQNVLVCIVADGREQVHPKTLDYLEAIGLYDEDLLTINSAGIGAQCHLFEHTLQLSVNGKCLLPIQTVFALKENKASKLDSHHWYFNAFAEQIQPEYTAVMDVGTMLTKSALYHLLFAFERNHQIGGACGQLTVDNPFENLSNWVISAQHFEYKISNILDKSLESCFGFISVLPGAFSAYRYEAIRGAPLDAYFQTLNIELDVLGPFIGNMYLAEDRILSFEVVARKNCNWTMHYVKDAVARTDVPHDLVGLISQRKRWLNGAFFATLFSIWNWGRIYSESKHTFVRKMAFLVFYVYHLLYTAFGFFLPANLYLALFFIVFQGFQQNRLEFIDTSEYSQTVLDCAVYIYNFSYLFGLLMLIIIGLGNNPKHMKLTYYFVGAVFGLMMMLSSLVGAGIFFSTPATVHSIVVSILTVGVYFIASALHGEVHHIFMTFTHYTALIPSFVNIFTIYSFCNLQDLSWGTKGLHDDPLLAASLDETEKGDFKDVIAKRRALEELRREEKERVENRKKNFEAFRTNVLLTWAFSNLIFALFVVYFASSSTYMPVLYIFVASLNTCRLLGSIGHWVYIHTEGLRGRVIDKSECGNGTGRYPQNSYVQLEEHYAALAEDQRTYASGRTNASVRTVNDVSSAA.

The segment at Met1–Ser27 is disordered. Thr237, Glu241, and Asp291 together coordinate UDP-N-acetyl-alpha-D-glucosamine. Asn420 carries an N-linked (GlcNAc...) asparagine glycan. Asp496 is an active-site residue. The N-linked (GlcNAc...) asparagine glycan is linked to Asn510. 6 helical membrane passes run Trp539 to Ser559, Tyr581 to Phe601, Ala625 to Leu645, Phe658 to Phe678, Thr684 to Leu704, and Ile711 to Ile731. The Conserved SWG motif motif lies at Ser741–Gly743. A run of 2 helical transmembrane segments spans residues Val800–Ser820 and Met825–Gly845. Residues Asn867 and Asn900 are each glycosylated (N-linked (GlcNAc...) asparagine).

It belongs to the chitin synthase family. Class II subfamily. Homodimer. Mn(2+) is required as a cofactor.

It is found in the cell membrane. It carries out the reaction [(1-&gt;4)-N-acetyl-beta-D-glucosaminyl](n) + UDP-N-acetyl-alpha-D-glucosamine = [(1-&gt;4)-N-acetyl-beta-D-glucosaminyl](n+1) + UDP + H(+). With respect to regulation, the activity is inhibited by nikkomycin Z (NikZ). Polymerizes chitin, a structural polymer of the cell wall and septum, by transferring the sugar moiety of UDP-GlcNAc to the non-reducing end of the growing chitin polymer. Involved in mycelial growth, sporangial production, zoospore release and pathogenesis. This chain is Chitin synthase 1, found in Phytophthora sojae (strain P6497) (Soybean stem and root rot agent).